A 389-amino-acid polypeptide reads, in one-letter code: Xylose isomerase (389 aa).

Residues histidine 54 and aspartate 57 contribute to the active site. Mg(2+) contacts are provided by glutamate 181, glutamate 217, histidine 220, aspartate 245, aspartate 255, aspartate 257, and aspartate 287.

It belongs to the xylose isomerase family. Homotetramer. Requires Mg(2+) as cofactor.

The protein resides in the cytoplasm. It carries out the reaction alpha-D-xylose = alpha-D-xylulofuranose. In terms of biological role, involved in D-xylose catabolism. This Streptomyces violaceusniger protein is Xylose isomerase (xylA).